The primary structure comprises 361 residues: Thermostable alkaline protease (361 aa).

A signal peptide spans methionine 1–alanine 24. Residues serine 25–serine 93 constitute a propeptide that is removed on maturation. Glutamine 94 contacts Ca(2+). A Peptidase S8 domain is found at proline 97–threonine 360. Aspartate 124 serves as the catalytic Charge relay system. Aspartate 132 serves as a coordination point for Ca(2+). Histidine 154 acts as the Charge relay system in catalysis. Ca(2+)-binding residues include leucine 165, asparagine 167, isoleucine 169, valine 171, alanine 255, tyrosine 257, and valine 260. Serine 307 functions as the Charge relay system in the catalytic mechanism.

The protein belongs to the peptidase S8 family. Ca(2+) is required as a cofactor.

It is found in the secreted. In terms of biological role, shows keratinolytic activity. The chain is Thermostable alkaline protease from Halalkalibacterium halodurans (strain ATCC BAA-125 / DSM 18197 / FERM 7344 / JCM 9153 / C-125) (Bacillus halodurans).